Consider the following 300-residue polypeptide: MTAFGVEPYGQPKYLEIAGKRMAYIDEGKGDAIVFQHGNPTSSYLWRNIMPHLEGLGRLVACDLIGMGASDKLSPSGPDRYSYGEQRDFLFALWDTLDLGDHVVLVLHDWGSALGFDWANQHRDRVQGIAFMEAIVTPMTWADWPPAVRGVFQGFRSPQGEPMALEHNIFVERVLPGAILRQLSDEEMNHYRRPFVNGGEDRRPTLSWPRNLPIDGEPAEVVALVNEYRSWLEETDMPKLFINAEPGAIITGRIRDYVRSWPNQTEITVPGVHFVQEDSPEEIGAAIAQFVRQLRSAAGV.

The AB hydrolase-1 domain maps to 32–155 (AIVFQHGNPT…PAVRGVFQGF (124 aa)). The Nucleophile role is filled by Asp-109. Catalysis depends on Glu-133, which acts as the Proton donor. The Proton acceptor role is filled by His-273.

The protein belongs to the haloalkane dehalogenase family. Type 2 subfamily. As to quaternary structure, monomer.

It catalyses the reaction 1-haloalkane + H2O = a halide anion + a primary alcohol + H(+). Its function is as follows. Catalyzes hydrolytic cleavage of carbon-halogen bonds in halogenated aliphatic compounds, leading to the formation of the corresponding primary alcohols, halide ions and protons. The protein is Haloalkane dehalogenase of Mycobacterium bovis (strain ATCC BAA-935 / AF2122/97).